The following is a 194-amino-acid chain: Calcium channel flower (194 aa).

The next 3 helical transmembrane spans lie at 35–55 (LGIV…FSII), 66–88 (IIQM…VCFE), and 107–127 (GLYI…ASLF).

Belongs to the calcium channel flower family. Homomultimer. Associates with the dally/ magu complex.

The protein localises to the cell membrane. The protein resides in the cytoplasmic vesicle. Its subcellular location is the secretory vesicle. It localises to the synaptic vesicle membrane. It is found in the presynaptic cell membrane. The protein localises to the endosome. With respect to regulation, channel activity is inhibited by La(3+), which reduces Ca(2+) influx and thus inhibits it's function in promoting activity-dependent bulk endocytosis (ADBE) in response to high stimuli. Functionally, transmembrane protein which mediates synaptic endocytosis, fitness-based cell culling, neuronal culling, morphogen gradient scaling, and calcium transport. Regulates synaptic endocytosis and hence couples exo- with endocytosis. Controls two major modes of synaptic vesicle (SV) endocytosis in the synaptic boutons of neuromuscular junctions (NMJs); Ca(2+) channel-independent Clathrin-mediated endocytosis (CME) in response to mild stimulation, and Ca(2+) channel-dependent activity-dependent bulk endocytosis (ADBE) in response to strong stimulation. Functions in ADBE and subsequent SV reformation from bulk endosomes by initiating Ca(2+) channel-dependent phosphatidylinositol 4,5-bisphosphate (PtdIns(4,5)P2) compartmentalization in synaptic boutons. There it acts at the periactive zone to provide the low Ca(2+) levels required to initiate Calcineurin activation and upregulate PtdIns(4,5)P2. Conversely PtdIns(4,5)P2 enhances fwe Ca(2+) channel-activity, establishing a positive feedback loop that induces PtdIns(4,5)P2 microdomain at the periactive zone. These microdomains trigger bulk membrane invagination (i.e. ADBE) by triggering actin polymerization while also promoting localization of fwe to bulk endosomes, thereby removing the ADBE trigger to reduce endocytosis and prevent excess membrane uptake. PtdIns(4,5)P2 then promotes SV reformation from the bulk endosomes, to coordinate ADBE and subsequent SV reformation. Different combinations of the flower isoforms at the cell membrane are also required for the identification and elimination of suboptimal or supernumerary cells during development, regeneration, and adulthood. Required for the recognition and elimination of unfit cells in the developing wing during cell competition. In the developing pupal retina, mediates the elimination of unwanted postmitotic neurons, including supernumerary photoreceptor neurons that form at the periphery of the retina and are contained within incomplete ommatidia units. Also required for efficient elimination and replacement of old neurons by newly generated neurons during regeneration in the adult brain following mechanical injury. Downstream of the flower fitness fingerprints, cells identified as unwanted or unfit are eliminated via apoptosis through the expression of ahuizotl (azot). However, the cells marked for elimination by the flower isoforms only undergo apoptosis if additional thresholds are met; (1) their neighboring fit/healthy cells express different levels of the fwe isoforms, and (2) the levels of the protective signal SPARC expressed by the loser or unwanted cells are unable to inhibit caspase activation. These additional thresholds for flower-mediated apoptosis, allows useful cells to recover from transient and limited stress before they are unnecessarily eliminated. Functions with dally and magu in a mechanism of scaling, which utilises apoptosis to ensure that the dpp morphogen gradient, which mediates organ growth, remains proportional to the size of the growing wing. In this mechanism, fwe represses dally- and Magu-dependent activity in expanding the gradient, and dally/Magu inhibits fwe-dependent apoptosis to keep cell death rate low. When the levels of these different proteins are optimally regulated the gradient correctly scales with organ growth but when this fails, fwe-mediated apoptosis is activated to trim the developing tissue to match the correct size of the gradient. The protein is Calcium channel flower of Drosophila sechellia (Fruit fly).